The chain runs to 470 residues: Glutamate--tRNA ligase 1 (470 aa).

A 'HIGH' region motif is present at residues 8–18; sequence PSPTGYLHVGG. Positions 250–254 match the 'KMSKS' region motif; the sequence is KLSKR. Lys253 contributes to the ATP binding site.

Belongs to the class-I aminoacyl-tRNA synthetase family. Glutamate--tRNA ligase type 1 subfamily. As to quaternary structure, monomer.

The protein resides in the cytoplasm. The catalysed reaction is tRNA(Glu) + L-glutamate + ATP = L-glutamyl-tRNA(Glu) + AMP + diphosphate. Its function is as follows. Catalyzes the attachment of glutamate to tRNA(Glu) in a two-step reaction: glutamate is first activated by ATP to form Glu-AMP and then transferred to the acceptor end of tRNA(Glu). In Pseudothermotoga lettingae (strain ATCC BAA-301 / DSM 14385 / NBRC 107922 / TMO) (Thermotoga lettingae), this protein is Glutamate--tRNA ligase 1.